Consider the following 753-residue polypeptide: Replication restart protein PriA (753 aa).

One can recognise a Helicase ATP-binding domain in the interval 228–395 (SLITTKFQTC…LSKKYTLSVL (168 aa)). ATP is bound at residue 241-248 (GVTGSGKT). The DEAH box signature appears at 337–340 (DEEH). Zn(2+) is bound by residues cysteine 458, cysteine 461, cysteine 467, cysteine 470, cysteine 485, cysteine 488, cysteine 499, and cysteine 502. The region spanning 491-646 (RLSKPITSCP…DFPAFYKEEI (156 aa)) is the Helicase C-terminal domain.

This sequence belongs to the helicase family. PriA subfamily. As to quaternary structure, component of the replication restart primosome. Requires Zn(2+) as cofactor.

It catalyses the reaction Couples ATP hydrolysis with the unwinding of duplex DNA by translocating in the 3'-5' direction.. The enzyme catalyses ATP + H2O = ADP + phosphate + H(+). Functionally, initiates the restart of stalled replication forks, which reloads the replicative helicase on sites other than the origin of replication. Recognizes and binds to abandoned replication forks and remodels them to uncover a helicase loading site. Promotes assembly of the primosome at these replication forks. The chain is Replication restart protein PriA from Chlamydia muridarum (strain MoPn / Nigg).